Consider the following 692-residue polypeptide: Translation initiation factor IF-2 (692 aa).

The interval 51-114 is disordered; it reads KAKPENAKKG…KPAETPGKIT (64 aa). The span at 59–84 shows a compositional bias: low complexity; sequence KGQNQKQSNNQQQNRQKQNQKNQSKP. Positions 85-94 are enriched in basic residues; that stretch reads NKNKKQKGPK. A tr-type G domain is found at 193 to 362; the sequence is ERPAVVTIMG…LLVSEVEELK (170 aa). The G1 stretch occupies residues 202–209; sequence GHVDHGKT. 202-209 lines the GTP pocket; it reads GHVDHGKT. Residues 227 to 231 form a G2 region; the sequence is GITQH. The segment at 248–251 is G3; the sequence is DTPG. GTP contacts are provided by residues 248 to 252 and 302 to 305; these read DTPGH and NKMD. Residues 302–305 are G4; sequence NKMD. The tract at residues 338–340 is G5; that stretch reads SAI.

The protein belongs to the TRAFAC class translation factor GTPase superfamily. Classic translation factor GTPase family. IF-2 subfamily.

It is found in the cytoplasm. One of the essential components for the initiation of protein synthesis. Protects formylmethionyl-tRNA from spontaneous hydrolysis and promotes its binding to the 30S ribosomal subunits. Also involved in the hydrolysis of GTP during the formation of the 70S ribosomal complex. The polypeptide is Translation initiation factor IF-2 (Oceanobacillus iheyensis (strain DSM 14371 / CIP 107618 / JCM 11309 / KCTC 3954 / HTE831)).